An 861-amino-acid polypeptide reads, in one-letter code: Probable linoleate 9S-lipoxygenase 8 (861 aa).

The region spanning 33–160 is the PLAT domain; the sequence is FTDLASSLTG…NYKSDRIFFA (128 aa). Residues 163–861 form the Lipoxygenase domain; sequence PYLPSETPEL…GKGIPNSVSI (699 aa). A disordered region spans residues 220–245; it reads TLGGSAEYPYPRRGRTGRPPTRTDPK. Residues His522, His527, His713, Asn717, and Ile861 each coordinate Fe cation.

The protein belongs to the lipoxygenase family. In terms of assembly, monomer. Fe cation is required as a cofactor.

The protein localises to the cytoplasm. It catalyses the reaction (9Z,12Z)-octadecadienoate + O2 = (9S)-hydroperoxy-(10E,12Z)-octadecadienoate. It participates in lipid metabolism; oxylipin biosynthesis. Plant lipoxygenases may be involved in a number of diverse aspects of plant physiology including growth and development, pest resistance, and senescence or responses to wounding. Catalyzes the hydroperoxidation of lipids containing a cis,cis-1,4-pentadiene structure. This is Probable linoleate 9S-lipoxygenase 8 (LOX1.8) from Solanum tuberosum (Potato).